Reading from the N-terminus, the 443-residue chain is Glutamate--tRNA ligase 1 (443 aa).

The 'HIGH' region motif lies at 7–17 (PSPTGYLHVGN). The 'KMSKS' region motif lies at 236-240 (KISKR). Lys-239 provides a ligand contact to ATP.

This sequence belongs to the class-I aminoacyl-tRNA synthetase family. Glutamate--tRNA ligase type 1 subfamily. In terms of assembly, monomer.

It localises to the cytoplasm. The enzyme catalyses tRNA(Glu) + L-glutamate + ATP = L-glutamyl-tRNA(Glu) + AMP + diphosphate. Its function is as follows. Catalyzes the attachment of glutamate to tRNA(Glu) in a two-step reaction: glutamate is first activated by ATP to form Glu-AMP and then transferred to the acceptor end of tRNA(Glu). This is Glutamate--tRNA ligase 1 from Ehrlichia chaffeensis (strain ATCC CRL-10679 / Arkansas).